A 452-amino-acid chain; its full sequence is tRNA modification GTPase MnmE (452 aa).

Residues R21, E82, and R121 each contribute to the (6S)-5-formyl-5,6,7,8-tetrahydrofolate site. The TrmE-type G domain maps to 214-372 (GARVVLVGRP…LAKTIATTLL (159 aa)). N224 is a K(+) binding site. GTP-binding positions include 224–229 (NVGKSS), 243–249 (TPIPGTT), 268–271 (DTAG), and 353–355 (SAR). S228 lines the Mg(2+) pocket. K(+) contacts are provided by T243, I245, and T248. T249 contacts Mg(2+). (6S)-5-formyl-5,6,7,8-tetrahydrofolate is bound at residue K452.

The protein belongs to the TRAFAC class TrmE-Era-EngA-EngB-Septin-like GTPase superfamily. TrmE GTPase family. In terms of assembly, homodimer. Heterotetramer of two MnmE and two MnmG subunits. The cofactor is K(+).

Its subcellular location is the cytoplasm. In terms of biological role, exhibits a very high intrinsic GTPase hydrolysis rate. Involved in the addition of a carboxymethylaminomethyl (cmnm) group at the wobble position (U34) of certain tRNAs, forming tRNA-cmnm(5)s(2)U34. The polypeptide is tRNA modification GTPase MnmE (Chloroflexus aurantiacus (strain ATCC 29366 / DSM 635 / J-10-fl)).